Here is an 84-residue protein sequence, read N- to C-terminus: Putative membrane protein insertion efficiency factor (84 aa).

The protein belongs to the UPF0161 family.

Its subcellular location is the cell inner membrane. Functionally, could be involved in insertion of integral membrane proteins into the membrane. The sequence is that of Putative membrane protein insertion efficiency factor from Shewanella oneidensis (strain ATCC 700550 / JCM 31522 / CIP 106686 / LMG 19005 / NCIMB 14063 / MR-1).